Here is a 259-residue protein sequence, read N- to C-terminus: Flagellar L-ring protein (259 aa).

The first 15 residues, 1-15 (MKRISLIALVTIMSG), serve as a signal peptide directing secretion. A lipid anchor (N-palmitoyl cysteine) is attached at Cys16. Cys16 carries S-diacylglycerol cysteine lipidation.

Belongs to the FlgH family. As to quaternary structure, the basal body constitutes a major portion of the flagellar organelle and consists of four rings (L,P,S, and M) mounted on a central rod.

The protein resides in the cell outer membrane. Its subcellular location is the bacterial flagellum basal body. Functionally, assembles around the rod to form the L-ring and probably protects the motor/basal body from shearing forces during rotation. The sequence is that of Flagellar L-ring protein from Vibrio vulnificus (strain CMCP6).